A 1266-amino-acid chain; its full sequence is Neuronal-glial cell adhesion molecule (1266 aa).

A signal peptide spans 1–20; that stretch reads MALPMVGLLLLLLLGGPGAA. Residues 21 to 1130 lie on the Extracellular side of the membrane; that stretch reads ITIPPEYGAH…PQPGGGVCTK (1110 aa). Ig-like C2-type domains are found at residues 36–128, 135–221, 236–322, 327–413, 418–506, and 510–597; these read PELT…NVIA, PKEK…KEPL, PRLL…HSVT, PYWV…AFLH, PLRM…ALLE, and PTRI…AQLR. Disulfide bonds link Cys-58/Cys-110, Cys-154/Cys-205, Cys-260/Cys-306, and Cys-348/Cys-397. The N-linked (GlcNAc...) asparagine glycan is linked to Asn-97. N-linked (GlcNAc...) asparagine glycans are attached at residues Asn-288, Asn-390, Asn-434, Asn-472, and Asn-498. A disulfide bond links Cys-441 and Cys-490. Cys-532 and Cys-581 are joined by a disulfide. Fibronectin type-III domains lie at 603-698, 700-804, 809-930, 934-1021, and 1022-1118; these read PSRD…TPPA, PERN…SGED, YPEN…TPEG, PPEE…TKPE, and PPSP…TNGT. The interval 685–710 is disordered; the sequence is EHHAPSAPIETPPAAPERNPGGVHGE. 2 N-linked (GlcNAc...) asparagine glycosylation sites follow: Asn-712 and Asn-819. The interval 857–882 is disordered; the sequence is SRRQAPPDPPQIPQSPAEDPPPFPPV. Residues 862 to 881 are compositionally biased toward pro residues; sequence PPDPPQIPQSPAEDPPPFPP. The Cell attachment site signature appears at 914-916; the sequence is RGD. A disordered region spans residues 1004–1025; it reads STPRERPALQTVGSTKPEPPSP. Asn-1061, Asn-1075, Asn-1100, and Asn-1116 each carry an N-linked (GlcNAc...) asparagine glycan. The chain crosses the membrane as a helical span at residues 1131–1153; the sequence is GWFIGFVSSVVLLLLILLILCFI. The Cytoplasmic segment spans residues 1154–1266; sequence KRSKGGKYSV…ASPCAGPPLD (113 aa). A compositionally biased stretch (basic and acidic residues) spans 1163 to 1195; sequence VKDKEDTQVDSEARPMKDETFGEYRSLESEAEK. Positions 1163–1266 are disordered; it reads VKDKEDTQVD…ASPCAGPPLD (104 aa). Residues 1199 to 1211 are compositionally biased toward gly residues; it reads SGSGAGSGVGSPG.

This sequence belongs to the immunoglobulin superfamily. L1/neurofascin/NgCAM family. Binds to itself and to axonin 1. Brain.

Its subcellular location is the cell membrane. Mediates the adhesion of neurons to neurons and neurons to glia. It is involved in neuronal migration, neurite fasciculation and outgrowth. The protein is Neuronal-glial cell adhesion molecule of Gallus gallus (Chicken).